The chain runs to 100 residues: Urease subunit gamma (100 aa).

The protein belongs to the urease gamma subunit family. In terms of assembly, heterotrimer of UreA (gamma), UreB (beta) and UreC (alpha) subunits. Three heterotrimers associate to form the active enzyme.

It is found in the cytoplasm. It carries out the reaction urea + 2 H2O + H(+) = hydrogencarbonate + 2 NH4(+). Its pathway is nitrogen metabolism; urea degradation; CO(2) and NH(3) from urea (urease route): step 1/1. This is Urease subunit gamma from Rhodopseudomonas palustris (strain BisA53).